A 22-amino-acid polypeptide reads, in one-letter code: 5-methyltetrahydropteroyltriglutamate--homocysteine methyltransferase (22 aa).

Belongs to the vitamin-B12 independent methionine synthase family. Zn(2+) serves as cofactor.

The protein resides in the cytoplasm. The enzyme catalyses 5-methyltetrahydropteroyltri-L-glutamate + L-homocysteine = tetrahydropteroyltri-L-glutamate + L-methionine. The protein operates within amino-acid biosynthesis; L-methionine biosynthesis via de novo pathway; L-methionine from L-homocysteine (MetE route): step 1/1. In terms of biological role, catalyzes the transfer of a methyl group from 5-methyltetrahydrofolate to homocysteine resulting in methionine formation. The polypeptide is 5-methyltetrahydropteroyltriglutamate--homocysteine methyltransferase (Pseudotsuga menziesii (Douglas-fir)).